Consider the following 826-residue polypeptide: Arsenite oxidase subunit AioA (826 aa).

[3Fe-4S] cluster-binding residues include cysteine 22, cysteine 25, and cysteine 29. Residues histidine 196, glutamate 204, arginine 419, and histidine 423 each coordinate substrate.

Belongs to the prokaryotic molybdopterin-containing oxidoreductase family. Heterodimer consisting of a large and a small subunit. [3Fe-4S] cluster is required as a cofactor. It depends on Mo-bis(molybdopterin guanine dinucleotide) as a cofactor.

It carries out the reaction 2 oxidized [azurin] + arsenite + H2O = 2 reduced [azurin] + arsenate + 3 H(+). Functionally, involved in the detoxification of arsenic. Oxidizes As(III)O3(3-) (arsenite) to the somewhat less toxic As(V)O4(3-) (arsenate). The polypeptide is Arsenite oxidase subunit AioA (aioA) (Herminiimonas arsenicoxydans).